Reading from the N-terminus, the 581-residue chain is Estrogen receptor (581 aa).

Residues 1–144 (MYPEDSRVSG…GFEMAKEMRF (144 aa)) form a modulating region. 2 disordered regions span residues 45–66 (APLD…SGPN) and 99–123 (RSSV…DSYS). Residues 56–66 (GSLQSLGSGPN) show a composition bias toward polar residues. The nuclear receptor DNA-binding region spans 142–217 (MRFCAVCSDY…VGMMKGGVRK (76 aa)). 2 NR C4-type zinc fingers span residues 145–165 (CAVC…CEGC) and 181–200 (CPAT…CQAC). The hinge stretch occupies residues 211–272 (MKGGVRKDRG…GGGKSSVISM (62 aa)). A compositionally biased stretch (basic and acidic residues) spans 216–246 (RKDRGRVLRRDKRRTGTSDRDKASKGLEHRT). The disordered stretch occupies residues 216-269 (RKDRGRVLRRDKRRTGTSDRDKASKGLEHRTAPPQDRRKHISSSAGGGGGKSSV). The 237-residue stretch at 273–509 (PPDQVLLLLR…DLLLEMLDAH (237 aa)) folds into the NR LBD domain. Basic and acidic residues predominate over residues 514–528 (PDRPAETWSQADREP). Residues 514–581 (PDRPAETWSQ…VHPHPMKPTE (68 aa)) are disordered. Basic residues predominate over residues 572–581 (VHPHPMKPTE).

It belongs to the nuclear hormone receptor family. NR3 subfamily. As to quaternary structure, binds DNA as a homodimer. Can form a heterodimer with ER-beta.

The protein localises to the nucleus. Its function is as follows. The steroid hormones and their receptors are involved in the regulation of eukaryotic gene expression and affect cellular proliferation and differentiation in target tissues. This Sparus aurata (Gilthead sea bream) protein is Estrogen receptor (esr1).